Reading from the N-terminus, the 264-residue chain is MEALLESRSGLWAGGPAPGQFYRIPPTPGSSVDPVSALYGSPITRTQNPMVTGTSVLGLKFEGGVVIAADMLGSYGSLARFRNISRIMRVNNSTMLGASGDYADFQYLKQVLGQMVIDEELLGDGHSYSPKAIHSWLTRAMYSRRSKMNPLWNTMVIGGYADGESFLGYVDMLGVAYEAPSLATGYGAYLAQPLLREVLEKQPVLSQTEARELVERCMRVLYYRDARSYNRFQIATVTEKGVEIEGPLSAETNWDIAHMISGFE.

Met-1 bears the N-acetylmethionine mark. Positions 1 to 45 (MEALLESRSGLWAGGPAPGQFYRIPPTPGSSVDPVSALYGSPITR) are excised as a propeptide. Residue Tyr-102 is modified to Phosphotyrosine.

The protein belongs to the peptidase T1B family. The 26S proteasome consists of a 20S proteasome core and two 19S regulatory subunits. The 20S proteasome core is a barrel-shaped complex made of 28 subunits that are arranged in four stacked rings. The two outer rings are each formed by seven alpha subunits, and the two inner rings are formed by seven beta subunits. The proteolytic activity is exerted by three beta-subunits PSMB5, PSMB6 and PSMB7. Forms a ternary complex with SMAD1 and OAZ1 before PSMB4 is incorporated into the 20S proteasome. Interacts with PRPF19.

Its subcellular location is the cytoplasm. It localises to the nucleus. Functionally, non-catalytic component of the 20S core proteasome complex involved in the proteolytic degradation of most intracellular proteins. This complex plays numerous essential roles within the cell by associating with different regulatory particles. Associated with two 19S regulatory particles, forms the 26S proteasome and thus participates in the ATP-dependent degradation of ubiquitinated proteins. The 26S proteasome plays a key role in the maintenance of protein homeostasis by removing misfolded or damaged proteins that could impair cellular functions, and by removing proteins whose functions are no longer required. Associated with the PA200 or PA28, the 20S proteasome mediates ubiquitin-independent protein degradation. This type of proteolysis is required in several pathways including spermatogenesis (20S-PA200 complex) or generation of a subset of MHC class I-presented antigenic peptides (20S-PA28 complex). SMAD1/OAZ1/PSMB4 complex mediates the degradation of the CREBBP/EP300 repressor SNIP1. The chain is Proteasome subunit beta type-4 (PSMB4) from Bos taurus (Bovine).